Reading from the N-terminus, the 350-residue chain is Small ribosomal subunit biogenesis GTPase RsgA (350 aa).

Residues 1–30 (MSKRKLTQNQQRRIQSNNAKTLHRHQHRHK) are disordered. Over residues 7-20 (TQNQQRRIQSNNAK) the composition is skewed to polar residues. Residues 21-30 (TLHRHQHRHK) show a composition bias toward basic residues. The CP-type G domain maps to 106 to 274 (HNQIVRPDYY…LIDSPGIREF (169 aa)). GTP contacts are provided by residues 162–165 (NKAD) and 216–224 (GQSGVGKSS). Zn(2+)-binding residues include Cys-298, Cys-303, His-305, and Cys-311.

It belongs to the TRAFAC class YlqF/YawG GTPase family. RsgA subfamily. Monomer. Associates with 30S ribosomal subunit, binds 16S rRNA. Requires Zn(2+) as cofactor.

The protein resides in the cytoplasm. One of several proteins that assist in the late maturation steps of the functional core of the 30S ribosomal subunit. Helps release RbfA from mature subunits. May play a role in the assembly of ribosomal proteins into the subunit. Circularly permuted GTPase that catalyzes slow GTP hydrolysis, GTPase activity is stimulated by the 30S ribosomal subunit. The protein is Small ribosomal subunit biogenesis GTPase RsgA of Histophilus somni (strain 2336) (Haemophilus somnus).